A 28-amino-acid polypeptide reads, in one-letter code: Conotoxin as14b (28 aa).

2 cysteine pairs are disulfide-bonded: Cys7–Cys27 and Cys11–Cys23.

The protein belongs to the conotoxin L superfamily. As to expression, expressed by the venom duct.

Its subcellular location is the secreted. Functionally, in vivo, intracranial injection elicits scratching and grooming activity in mice, and causes body and rear limb extension and tail curling immediately upon injection. In Conus cancellatus (Cancellate cone), this protein is Conotoxin as14b.